A 363-amino-acid polypeptide reads, in one-letter code: NAD(P)H-quinone oxidoreductase subunit 1, chloroplastic (363 aa).

6 consecutive transmembrane segments (helical) span residues isoleucine 27–isoleucine 47, phenylalanine 98–phenylalanine 118, leucine 127–methionine 147, tyrosine 248–serine 268, valine 300–isoleucine 320, and leucine 336–threonine 356.

It belongs to the complex I subunit 1 family. NDH is composed of at least 16 different subunits, 5 of which are encoded in the nucleus.

The protein localises to the plastid. The protein resides in the chloroplast thylakoid membrane. The enzyme catalyses a plastoquinone + NADH + (n+1) H(+)(in) = a plastoquinol + NAD(+) + n H(+)(out). It catalyses the reaction a plastoquinone + NADPH + (n+1) H(+)(in) = a plastoquinol + NADP(+) + n H(+)(out). NDH shuttles electrons from NAD(P)H:plastoquinone, via FMN and iron-sulfur (Fe-S) centers, to quinones in the photosynthetic chain and possibly in a chloroplast respiratory chain. The immediate electron acceptor for the enzyme in this species is believed to be plastoquinone. Couples the redox reaction to proton translocation, and thus conserves the redox energy in a proton gradient. This is NAD(P)H-quinone oxidoreductase subunit 1, chloroplastic from Amborella trichopoda.